The chain runs to 391 residues: ATP phosphoribosyltransferase regulatory subunit (391 aa).

This sequence belongs to the class-II aminoacyl-tRNA synthetase family. HisZ subfamily. As to quaternary structure, heteromultimer composed of HisG and HisZ subunits.

The protein localises to the cytoplasm. It functions in the pathway amino-acid biosynthesis; L-histidine biosynthesis; L-histidine from 5-phospho-alpha-D-ribose 1-diphosphate: step 1/9. Required for the first step of histidine biosynthesis. May allow the feedback regulation of ATP phosphoribosyltransferase activity by histidine. The chain is ATP phosphoribosyltransferase regulatory subunit from Bacillus licheniformis (strain ATCC 14580 / DSM 13 / JCM 2505 / CCUG 7422 / NBRC 12200 / NCIMB 9375 / NCTC 10341 / NRRL NRS-1264 / Gibson 46).